The sequence spans 508 residues: Protein NODULATION SIGNALING PATHWAY 2 (508 aa).

The segment at 75–98 is disordered; sequence ITTTTTTTTTTDEEEEEMETTTTT. The GRAS domain occupies 108–500; the sequence is VGDDSKGLKL…RRLLSASLWT (393 aa). The tract at residues 115–190 is leucine repeat I (LRI); it reads LKLVHLLMAG…NNHHHHNNNK (76 aa). The interval 209 to 273 is VHIID; sequence FQLLQDMSPY…NNGPHLRITA (65 aa). The VHIID signature appears at 240-244; that stretch reads VHVID. The segment at 289-321 is leucine repeat II (LRII); it reads ETGRRLTSFAASLGQPFSFHHCRLDSDETFRPS. Residues 331 to 422 form a PFYRE region; the sequence is LVFNCMLNLP…RVFFGPRIAG (92 aa). The SAW stretch occupies residues 425 to 500; that stretch reads GRIYRTGGEE…RRLLSASLWT (76 aa).

This sequence belongs to the GRAS family. In terms of assembly, interacts with RAM1. Interacts with IPN2 and RAD1. As to expression, expressed in roots, shoots and leaves.

The protein resides in the nucleus membrane. Its subcellular location is the endoplasmic reticulum. Its function is as follows. Transcriptional regulator essential for Nod-factor-induced gene expression. Acts downstream of calcium spiking and DMI3, a calcium/calmodulin-dependent protein kinase (CCaMK). Transcription factor involved in the control of strigolactone biosynthesis in roots through the activation of the beta-carotene isomerase D27, which participates in a pathway leading to biosynthesis of strigolactones. This Medicago truncatula (Barrel medic) protein is Protein NODULATION SIGNALING PATHWAY 2.